The following is a 63-amino-acid chain: Large ribosomal subunit protein bL28 (63 aa).

The disordered stretch occupies residues 1–20 (MSRRCAITGKGPMVGNNVSH).

Belongs to the bacterial ribosomal protein bL28 family.

This chain is Large ribosomal subunit protein bL28, found in Campylobacter curvus (strain 525.92).